The sequence spans 181 residues: Adenylate kinase (181 aa).

An ATP-binding site is contributed by 10 to 15; it reads GAGKGT. Residues 30–59 are NMP; that stretch reads STGELFRRNIEKDTKLGHEAKKYLDAGDLV. AMP contacts are provided by residues threonine 31, arginine 36, 57–59, 85–88, and glutamine 92; these read DLV and GYPR. An LID region spans residues 126–132; that stretch reads GRGRADD. ATP is bound at residue arginine 127. Arginine 129 and arginine 140 together coordinate AMP. Glycine 166 contributes to the ATP binding site.

The protein belongs to the adenylate kinase family. In terms of assembly, monomer.

The protein localises to the cytoplasm. The catalysed reaction is AMP + ATP = 2 ADP. It functions in the pathway purine metabolism; AMP biosynthesis via salvage pathway; AMP from ADP: step 1/1. Functionally, catalyzes the reversible transfer of the terminal phosphate group between ATP and AMP. Plays an important role in cellular energy homeostasis and in adenine nucleotide metabolism. In Mycobacterium leprae (strain Br4923), this protein is Adenylate kinase.